Consider the following 1360-residue polypeptide: MALTFTEKKRLRKNFGRISSIIDIPNLISVQKESFVRFLQTGTEFEKMKDTGLHGVFLSVFPIHDYAGTVSLEYVSYALGEPKYDVDECLQRGMTFSAPLKVAFRLVIWDENEETGTKTVREIKEQDVYLGEIPLMTNTGTFIINGTERVIVSQMHRSPGVFFDHDRGKTHSSGKLLFSARVIPYRGSWLDFEFDPKDLLFARIDRRRKLPVTTLLRAMGMSSEQILERFYEIETFRKEGVVWQKRMVPERLMGNRLNYAIVHPESGEEIVKAKKRVTARHIKKFEELGMDWLPVSQEELIGSFVARNMSDVMGEVVIEAGAEITEEMVQYLEDGGIKEIDVLFIDGMSVGAYLRNTLALDKNSGQDEALIDIYRMMRPGEPPTVDAAKALFNNLFFNSDRYDLSTVGRLKMNSRLSLNTELHIRTLQHDDILGVVDILLKLKDGHGKVDDIDHLGNRRVRSVGELLENQVRIGLVRMERAIRERMSSAEADQLVPHDVMNSKPFSAVIREFFGSSQLSQFMDQTNPLSEITHKRRLSALGPGGMTRERAGFEVRDVHPTHYGRICPIETPEGPNIGLINSLSTYARINEFGFIESPYRQVKEGTPIDQVDFLSAIDEENYIIAQANAKLGDEASEEDALIQCRHKLEFMVATPDRVNYQDVSPKQTVSVAASLIPFLENDDANRALMGSNMQRQAVPLIKTDAPLVGTGIESVVARDSGVTITARRTGVVDEVDAARIVVKADEEPGSTEPGVDIYNLTKFSRSNQNTCINQVPLVKNGERVTAGDIIADGPSTQIGELALGRNVLVAFMPWNGYNFEDSILISERLVAEDVFTSIHIDEFEVMARDTKLGAEEITRDMPNVGEDALRNLDESGIIYVGAEVKPGDILVGKVTPKGETQLTPEEKLLRAIFGEKASDVRDTSLRLPPGVAGTVVDVRVFSRRGLEKDDRAKLIDQDEIALLRKDMAAERRIIERDADERIRNLMNGKPVRSAPGLQPGDHISQSWLDKSPSSHLRDVVLDDDAITQQIEGIRHHVEKAADRLKKRFESKVEKLERGDDLPPGVLKMVKVYIAVKRKLQPGDKMAGRHGNKGVISKINPLEDMPYMANGTPVDIVLNPLGVPSRMNVGQILETHLGWAARGMGFKIEEALKQHRKGVADVLRRQFEEIYDNTRESAEIAALSDDQLVDMAKNLQYGVPTATPVFDGAIESDISSWLNKAGLPTSGQIQLIDGRTGEPFDRHVTVGYIYMLKLHHLVDDKIHARSIGPYSLVTQQPLGGKAQFGGQRFGEMEVWALEAYGAAYTLQEMLTVKSDDVAGRTKIYESIVKGDDTFEAGVPESFNVLVKELQALALDVTLQRDD.

This sequence belongs to the RNA polymerase beta chain family. In terms of assembly, the RNAP catalytic core consists of 2 alpha, 1 beta, 1 beta' and 1 omega subunit. When a sigma factor is associated with the core the holoenzyme is formed, which can initiate transcription.

The catalysed reaction is RNA(n) + a ribonucleoside 5'-triphosphate = RNA(n+1) + diphosphate. DNA-dependent RNA polymerase catalyzes the transcription of DNA into RNA using the four ribonucleoside triphosphates as substrates. This chain is DNA-directed RNA polymerase subunit beta, found in Magnetococcus marinus (strain ATCC BAA-1437 / JCM 17883 / MC-1).